Consider the following 409-residue polypeptide: Effector protein BipC (409 aa).

Disordered stretches follow at residues 268–287 (RETG…RMSD) and 330–396 (SGGQ…VAND). Over residues 360-369 (AQQTAMAAAS) the composition is skewed to low complexity. The span at 370 to 382 (ARDEAAHRGRDAA) shows a compositional bias: basic and acidic residues.

This sequence belongs to the SctB/SipC family.

The protein resides in the secreted. The sequence is that of Effector protein BipC (bipC) from Burkholderia thailandensis (strain ATCC 700388 / DSM 13276 / CCUG 48851 / CIP 106301 / E264).